The sequence spans 416 residues: Tyrosine--tRNA ligase (416 aa).

Tyr-39 provides a ligand contact to L-tyrosine. A 'HIGH' region motif is present at residues 44–53 (CTASSLHVGS). Tyr-176 and Gln-180 together coordinate L-tyrosine. Positions 236–240 (KMGKT) match the 'KMSKS' region motif. Residue Lys-239 coordinates ATP. One can recognise an S4 RNA-binding domain in the interval 349 to 415 (ISLIDLLHDI…GKKRHIKVMV (67 aa)).

This sequence belongs to the class-I aminoacyl-tRNA synthetase family. TyrS type 1 subfamily. Homodimer.

The protein resides in the cytoplasm. It catalyses the reaction tRNA(Tyr) + L-tyrosine + ATP = L-tyrosyl-tRNA(Tyr) + AMP + diphosphate + H(+). Catalyzes the attachment of tyrosine to tRNA(Tyr) in a two-step reaction: tyrosine is first activated by ATP to form Tyr-AMP and then transferred to the acceptor end of tRNA(Tyr). The sequence is that of Tyrosine--tRNA ligase from Wolbachia sp. subsp. Brugia malayi (strain TRS).